We begin with the raw amino-acid sequence, 3601 residues long: Protein SPIRRIG (3601 aa).

7 disordered regions span residues 17–50 (AQSSDSDPFPVDLTAPPSSSSSSSSPSFTYPSSS), 398–426 (SSNHDSGSDDPEVFHDGENTNSTENADFS), 449–476 (PAEPSVGRASRSSQTKPTGHSRSRTSSV), 638–657 (QYSGVSSHSDRKPSSGSFRK), 1954–1993 (HINDADDSGSQGSLPHDQDQSTKTSISVGSFPQGQVSLGS), 2009–2049 (ENIL…DFQD), and 2715–2747 (TTHVKSETGSPRHSSSAKMDETNGREEKSEKEL). A compositionally biased stretch (low complexity) spans 32 to 50 (PPSSSSSSSSPSFTYPSSS). Polar residues-rich tracts occupy residues 416–426 (NTNSTENADFS) and 458–476 (SRSSQTKPTGHSRSRTSSV). Over residues 1974–1991 (STKTSISVGSFPQGQVSL) the composition is skewed to polar residues. Basic and acidic residues predominate over residues 2027–2048 (EDVKKQDDHHVGPSASSERDFQ). Residues 2715-2731 (TTHVKSETGSPRHSSSA) are compositionally biased toward polar residues. Over residues 2732–2747 (KMDETNGREEKSEKEL) the composition is skewed to basic and acidic residues. Residues 2760 to 2927 (EHLEKIRFRY…EREEVFKNLV (168 aa)) enclose the BEACH-type PH domain. The region spanning 2952–3244 (GGRLFKLMAK…QLFPKAHVKR (293 aa)) is the BEACH domain. WD repeat units follow at residues 3328-3367 (HESNQIQCAGVSHDGRIVVTGAEDGLVCVWRVSKDGPRGS), 3378-3417 (AHTAKVTCLRVSQPYMMIASGSDDCTVIIWDLSSLSFVRQ), 3464-3507 (PSDS…DPVS), and 3540-3579 (FHKQPVTALHLTSDLKQLLSGDSAGQLLSWTVPDETLRAS).

As to quaternary structure, interacts with DCP1. In terms of tissue distribution, expressed in flowers, leaves, stems, hypocotyls and roots.

Its subcellular location is the cytoplasm. The protein resides in the P-body. Involved in cell morphogenesis. May have a function in membrane fusion or membrane composition. Required for salt stress tolerance. Regulates the salt stress-dependent post-transcriptional stabilization, cytoplasmic agglomeration, and localization to P-bodies of a subset of salt stress-regulated mRNAs. This chain is Protein SPIRRIG, found in Arabidopsis thaliana (Mouse-ear cress).